Here is a 436-residue protein sequence, read N- to C-terminus: Alpha-2 adrenergic receptor (436 aa).

The Extracellular portion of the chain corresponds to 1–27; it reads MDVTQSNATKDDANITVTPWPYTETAA. N-linked (GlcNAc...) asparagine glycosylation is found at N7 and N14. A helical membrane pass occupies residues 28 to 52; it reads AFIILVVSVIILVSIVGNVLVIVAV. At 53–64 the chain is on the cytoplasmic side; it reads LTSRALRAPQNL. Residues 65–90 form a helical membrane-spanning segment; that stretch reads FLVSLACADILVATLVIPFSLANEIM. Residues 91–100 lie on the Extracellular side of the membrane; that stretch reads GYWFFGSTWC. Cysteines 100 and 173 form a disulfide. The chain crosses the membrane as a helical span at residues 101–123; sequence AFYLALDVLFCTSSIVHLCAISL. Residues 124–144 lie on the Cytoplasmic side of the membrane; the sequence is DRYWSVTKAVSYNLKRTPKRI. A helical transmembrane segment spans residues 145–167; it reads KSMIAVVWVISAVISFPPLIMTK. Residues 168–178 are Extracellular-facing; the sequence is HDEKECLINDE. The helical transmembrane segment at 179-202 threads the bilayer; sequence TWYILSSSLVSFFAPGFIMITVYC. At 203–329 the chain is on the cytoplasmic side; it reads KIYRVAKQRS…QMREKRFTFV (127 aa). Residues 238 to 280 are disordered; sequence KFEKESPSSNSSESNQRQEELDDIDLEESATSDNKPKSSRFSN. A compositionally biased stretch (acidic residues) spans 257-267; sequence ELDDIDLEESA. The helical transmembrane segment at 330-353 threads the bilayer; that stretch reads LTVVMGVFVLCWFPFFFTYSLHAI. Topologically, residues 354–366 are extracellular; sequence CGDSCEPPEALFK. The chain crosses the membrane as a helical span at residues 367–387; it reads LFFWIGYCNSSVNPIIYTIFN. The Cytoplasmic segment spans residues 388–436; it reads RDFRKAFKKICLLDCAAHLRDSCLGTLGRLNAKCIFECHQKSNQEETAN.

This sequence belongs to the G-protein coupled receptor 1 family.

It localises to the cell membrane. In terms of biological role, alpha-2 adrenergic receptors mediate the catecholamine-induced inhibition of adenylate cyclase through the action of G proteins. This is Alpha-2 adrenergic receptor from Carassius auratus (Goldfish).